A 590-amino-acid polypeptide reads, in one-letter code: Oleate hydratase (590 aa).

4 residues coordinate FAD: Ala33, Glu56, Ser64, and Glu82. Residue Glu82 is the Proton acceptor of the active site. Tyr200 acts as the Proton donor in catalysis. Val249, Ser291, Thr508, and Ser512 together coordinate FAD.

Belongs to the oleate hydratase family. In terms of assembly, monomer and homodimer. Both forms seem to be active. FAD is required as a cofactor.

It catalyses the reaction (R)-10-hydroxyoctadecanoate = (9Z)-octadecenoate + H2O. The catalysed reaction is (9Z)-octadecenoate + H2O = 10-hydroxyoctadecanoate. It carries out the reaction (9Z)-hexadecenoate + H2O = 10-hydroxyhexadecanoate. The enzyme catalyses (9Z,12Z)-octadecadienoate + H2O = (12Z)-10-hydroxyoctadecenoate. It catalyses the reaction (12Z)-10-hydroxyoctadecenoate + H2O = 10,13-dihydroxyoctadecanoate. The catalysed reaction is (9Z,12Z,15Z)-octadecatrienoate + H2O = (12Z,15Z)-10-hydroxyoctadecadienoate. It functions in the pathway lipid metabolism; fatty acid metabolism. Catalyzes the hydration of oleate at its cis-9-double bond to yield 10-hydroxyoctadecanoate, probably in the (R) configuration, and of linoleate at its cis-9- and cis-12-double bond to yield 10-hydroxy-12-octadecenoate and 10,13-dihydroxyoctadecanoate. Is not active on trans-double bonds and esterified fatty acids as substrate; is only active on cis-9- and/or cis-12-double bond of C16 and C18 fatty acids without any trans-configurations, producing 10-hydroxy and 10,13-dihydroxy derivatives. Appears to play a role in oleic acid detoxification and bacterial virulence. The protein is Oleate hydratase (sph) of Streptococcus pyogenes serotype M49 (strain NZ131).